Here is a 209-residue protein sequence, read N- to C-terminus: Eukaryotic translation initiation factor 4E (209 aa).

MRNA-binding positions include 51-52 (WH), 97-98 (WE), and 153-158 (RKQAYR).

The protein belongs to the eukaryotic initiation factor 4E family. In terms of assembly, eIF4F is a multi-subunit complex, the composition of which varies with external and internal environmental conditions. It is composed of at least eIF4A, eIF4E and eIF4G. eIF4E is also known to interact with other partners.

Functionally, recognizes and binds the 7-methylguanosine-containing mRNA cap during an early step in the initiation of protein synthesis and facilitates ribosome binding by inducing the unwinding of the mRNAs secondary structures. The protein is Eukaryotic translation initiation factor 4E (TIF45) of Candida albicans (strain SC5314 / ATCC MYA-2876) (Yeast).